We begin with the raw amino-acid sequence, 196 residues long: Nucleoid occlusion factor SlmA (196 aa).

The HTH tetR-type domain occupies threonine 7–isoleucine 68. The H-T-H motif DNA-binding region spans threonine 31 to phenylalanine 50. Positions glutamate 115 to lysine 142 form a coiled coil.

This sequence belongs to the nucleoid occlusion factor SlmA family. In terms of assembly, homodimer. Interacts with FtsZ.

The protein localises to the cytoplasm. Its subcellular location is the nucleoid. Its function is as follows. Required for nucleoid occlusion (NO) phenomenon, which prevents Z-ring formation and cell division over the nucleoid. Acts as a DNA-associated cell division inhibitor that binds simultaneously chromosomal DNA and FtsZ, and disrupts the assembly of FtsZ polymers. SlmA-DNA-binding sequences (SBS) are dispersed on non-Ter regions of the chromosome, preventing FtsZ polymerization at these regions. The sequence is that of Nucleoid occlusion factor SlmA from Photobacterium profundum (strain SS9).